Reading from the N-terminus, the 132-residue chain is Fatty acid-binding protein, brain (132 aa).

Val2 bears the N-acetylvaline mark. Position 127 to 129 (127 to 129) interacts with a fatty acid; sequence RHY.

This sequence belongs to the calycin superfamily. Fatty-acid binding protein (FABP) family. In terms of tissue distribution, expressed in brain and other neural tissues.

Its subcellular location is the cytoplasm. B-FABP could be involved in the transport of a so far unknown hydrophobic ligand with potential morphogenic activity during CNS development. It is required for the establishment of the radial glial fiber system in developing brain, a system that is necessary for the migration of immature neurons to establish cortical layers. This is Fatty acid-binding protein, brain (FABP7) from Homo sapiens (Human).